Consider the following 669-residue polypeptide: UvrABC system protein B (669 aa).

The region spanning 27–414 is the Helicase ATP-binding domain; the sequence is ESLQGEHKFQ…EARVIEQVIR (388 aa). An ATP-binding site is contributed by 40–47; sequence GATGTGKT. The short motif at 93–116 is the Beta-hairpin element; that stretch reads YYDYYQPEAYIPVTDTYIEKTASI. Residues 431–597 form the Helicase C-terminal domain; the sequence is QVDDLYGEIQ…PINKRANNAI (167 aa). The 36-residue stretch at 628-663 folds into the UVR domain; it reads PDLIQQLEEKMQEAAKKQEFEVAAIYRDRIQHLRDR.

It belongs to the UvrB family. In terms of assembly, forms a heterotetramer with UvrA during the search for lesions. Interacts with UvrC in an incision complex.

It is found in the cytoplasm. Its function is as follows. The UvrABC repair system catalyzes the recognition and processing of DNA lesions. A damage recognition complex composed of 2 UvrA and 2 UvrB subunits scans DNA for abnormalities. Upon binding of the UvrA(2)B(2) complex to a putative damaged site, the DNA wraps around one UvrB monomer. DNA wrap is dependent on ATP binding by UvrB and probably causes local melting of the DNA helix, facilitating insertion of UvrB beta-hairpin between the DNA strands. Then UvrB probes one DNA strand for the presence of a lesion. If a lesion is found the UvrA subunits dissociate and the UvrB-DNA preincision complex is formed. This complex is subsequently bound by UvrC and the second UvrB is released. If no lesion is found, the DNA wraps around the other UvrB subunit that will check the other stand for damage. The chain is UvrABC system protein B from Synechocystis sp. (strain ATCC 27184 / PCC 6803 / Kazusa).